Consider the following 349-residue polypeptide: Protein-glutamate methylesterase/protein-glutamine glutaminase (349 aa).

Positions 5-122 constitute a Response regulatory domain; it reads RVLSVDDSAL…REGMLAYSEM (118 aa). Position 56 is a 4-aspartylphosphate (D56). A CheB-type methylesterase domain is found at 152–344; it reads LLSSEKLIAI…QQMLAKISAG (193 aa). Residues S164, H190, and D286 contribute to the active site.

This sequence belongs to the CheB family. Phosphorylated by CheA. Phosphorylation of the N-terminal regulatory domain activates the methylesterase activity.

Its subcellular location is the cytoplasm. It catalyses the reaction [protein]-L-glutamate 5-O-methyl ester + H2O = L-glutamyl-[protein] + methanol + H(+). The enzyme catalyses L-glutaminyl-[protein] + H2O = L-glutamyl-[protein] + NH4(+). Its function is as follows. Involved in chemotaxis. Part of a chemotaxis signal transduction system that modulates chemotaxis in response to various stimuli. Catalyzes the demethylation of specific methylglutamate residues introduced into the chemoreceptors (methyl-accepting chemotaxis proteins or MCP) by CheR. Also mediates the irreversible deamidation of specific glutamine residues to glutamic acid. This Escherichia coli O6:K15:H31 (strain 536 / UPEC) protein is Protein-glutamate methylesterase/protein-glutamine glutaminase.